Consider the following 335-residue polypeptide: Methionine import ATP-binding protein MetN 2 (335 aa).

Residues 2–242 (IEFQNVHKTY…PEHPTTKRFV (241 aa)) enclose the ABC transporter domain. An ATP-binding site is contributed by 38–45 (GHSGAGKS).

Belongs to the ABC transporter superfamily. Methionine importer (TC 3.A.1.24) family. The complex is composed of two ATP-binding proteins (MetN), two transmembrane proteins (MetI) and a solute-binding protein (MetQ).

Its subcellular location is the cell inner membrane. It carries out the reaction L-methionine(out) + ATP + H2O = L-methionine(in) + ADP + phosphate + H(+). The catalysed reaction is D-methionine(out) + ATP + H2O = D-methionine(in) + ADP + phosphate + H(+). Functionally, part of the ABC transporter complex MetNIQ involved in methionine import. Responsible for energy coupling to the transport system. This chain is Methionine import ATP-binding protein MetN 2, found in Pseudomonas entomophila (strain L48).